An 88-amino-acid polypeptide reads, in one-letter code: uncharacterized protein (88 aa).

This is an uncharacterized protein from Acidianus convivator (ABV).